We begin with the raw amino-acid sequence, 880 residues long: Tyrosine-protein kinase receptor TYRO3 (880 aa).

The N-terminal stretch at 1 to 28 (MVYPGPPGLIAGLLLAALSLSCVDGAKA) is a signal peptide. 2 Ig-like C2-type domains span residues 29–114 (LGFV…KSVS) and 125–206 (PYFT…AIVE). The Extracellular portion of the chain corresponds to 29-414 (LGFVGHGYNL…QRHPHTRMSW (386 aa)). N-linked (GlcNAc...) asparagine glycosylation is found at asparagine 37 and asparagine 49. A disulfide bridge links cysteine 50 with cysteine 103. An N-linked (GlcNAc...) asparagine glycan is attached at asparagine 143. A disulfide bridge connects residues cysteine 146 and cysteine 189. Fibronectin type-III domains are found at residues 213 to 306 (PPFN…TKET) and 311 to 401 (LPQN…SKEE). N-linked (GlcNAc...) asparagine glycosylation is found at asparagine 216, asparagine 279, asparagine 351, and asparagine 365. Residues 415 to 435 (VPMVLGILTALVTVVAMTLIF) form a helical membrane-spanning segment. Residues 436-880 (LRKGRKETRF…MQEEQVVITL (445 aa)) lie on the Cytoplasmic side of the membrane. One can recognise a Protein kinase domain in the interval 503 to 774 (FTLGRTLGKG…VDLKQRLEAI (272 aa)). ATP is bound by residues 509–517 (LGKGEFGSV) and lysine 535. The Proton acceptor role is filled by aspartate 640. Tyrosine 671 bears the Phosphotyrosine; by autocatalysis mark. The interval 846–880 (EWSSSAQNGEARGLLHEEEEEEEEEMQEEQVVITL) is disordered. The segment covering 862–873 (EEEEEEEEEMQE) has biased composition (acidic residues).

Belongs to the protein kinase superfamily. Tyr protein kinase family. AXL/UFO subfamily. Post-translationally, tyrosine phosphorylated upon receptor stimulation. Detected in brain, spinal cord, intestine, lung, stomach, ovary, testis, skin and eye.

Its subcellular location is the cell membrane. The catalysed reaction is L-tyrosyl-[protein] + ATP = O-phospho-L-tyrosyl-[protein] + ADP + H(+). In terms of biological role, may be involved in cell adhesion processes, particularly in the central nervous system. The sequence is that of Tyrosine-protein kinase receptor TYRO3 (tyro3) from Xenopus laevis (African clawed frog).